Reading from the N-terminus, the 153-residue chain is Phosphoribosyl-AMP cyclohydrolase (153 aa).

Mg(2+) is bound at residue Asp-93. Cys-94 is a Zn(2+) binding site. Positions 95 and 97 each coordinate Mg(2+). Residues Cys-112 and Cys-119 each contribute to the Zn(2+) site.

It belongs to the PRA-CH family. Homodimer. Requires Mg(2+) as cofactor. It depends on Zn(2+) as a cofactor.

It localises to the cytoplasm. It carries out the reaction 1-(5-phospho-beta-D-ribosyl)-5'-AMP + H2O = 1-(5-phospho-beta-D-ribosyl)-5-[(5-phospho-beta-D-ribosylamino)methylideneamino]imidazole-4-carboxamide. Its pathway is amino-acid biosynthesis; L-histidine biosynthesis; L-histidine from 5-phospho-alpha-D-ribose 1-diphosphate: step 3/9. In terms of biological role, catalyzes the hydrolysis of the adenine ring of phosphoribosyl-AMP. This chain is Phosphoribosyl-AMP cyclohydrolase, found in Mesorhizobium japonicum (strain LMG 29417 / CECT 9101 / MAFF 303099) (Mesorhizobium loti (strain MAFF 303099)).